The sequence spans 314 residues: Ribosomal RNA small subunit methyltransferase H (314 aa).

S-adenosyl-L-methionine-binding positions include 36–38 (AGH), Asp-56, Phe-83, Asp-104, and Gln-111.

Belongs to the methyltransferase superfamily. RsmH family.

The protein localises to the cytoplasm. The enzyme catalyses cytidine(1402) in 16S rRNA + S-adenosyl-L-methionine = N(4)-methylcytidine(1402) in 16S rRNA + S-adenosyl-L-homocysteine + H(+). In terms of biological role, specifically methylates the N4 position of cytidine in position 1402 (C1402) of 16S rRNA. The chain is Ribosomal RNA small subunit methyltransferase H from Brevibacillus brevis (strain 47 / JCM 6285 / NBRC 100599).